The primary structure comprises 544 residues: (E,E)-germacrene B synthase (544 aa).

Mg(2+) is bound by residues D296, D300, and E449. A DDXXD motif motif is present at residues 296–300; sequence DDTFD.

The protein belongs to the terpene synthase family. Requires Mg(2+) as cofactor. It depends on Mn(2+) as a cofactor.

It localises to the cytoplasm. It catalyses the reaction (2E,6E)-farnesyl diphosphate = (1E,4E)-germacrene B + diphosphate. It participates in secondary metabolite biosynthesis; terpenoid biosynthesis. Functionally, involved in the biosynthesis of germacrene B. This Solanum habrochaites (Wild tomato) protein is (E,E)-germacrene B synthase (SSTLH1).